Consider the following 146-residue polypeptide: Mite group 2 allergen Der f 2 (146 aa).

The signal sequence occupies residues 1-17 (MISKILCLSLLVAAVVA). Intrachain disulfides connect C25-C136, C38-C44, and C90-C95.

The protein belongs to the NPC2 family.

The protein localises to the secreted. This chain is Mite group 2 allergen Der f 2 (DERF2), found in Dermatophagoides farinae (American house dust mite).